The following is a 1315-amino-acid chain: Activating molecule in BECN1-regulated autophagy protein 1A (1315 aa).

WD repeat units lie at residues 50–89 (DSPR…CVHS), 92–132 (GHRR…ESWL), and 134–174 (ESNS…TVVK). 10 disordered regions span residues 294–322 (RVPS…ARTE), 342–409 (FSSV…QRTG), 426–463 (FQSP…SSSI), 502–526 (NNNM…NPPH), 545–610 (SRRW…DTGQ), 630–660 (VYRQ…DNDY), 681–736 (RDSV…PRNA), 985–1134 (HSDG…STGQ), 1181–1208 (GSQT…PESL), and 1286–1315 (LLSS…EYGR). The segment covering 351–360 (NMRNHSSSSG) has biased composition (polar residues). Residues 378–388 (PGREGGGRHPG) show a composition bias toward basic and acidic residues. Composition is skewed to polar residues over residues 394–409 (SGLN…QRTG) and 426–435 (FQSPVYTSAS). 2 stretches are compositionally biased toward polar residues: residues 552–581 (GQPS…QSNE) and 633–647 (QSAS…QGAL). A compositionally biased stretch (low complexity) spans 696 to 715 (RPLSSNPSSLSPSPVPNAES). Residues 716–725 (SEVDFEEFEE) show a composition bias toward acidic residues. Positions 1009–1021 (PSSSRSGDRAGSS) are enriched in low complexity. A compositionally biased stretch (basic and acidic residues) spans 1022 to 1031 (RTDRRSRRDI). Residues 1047–1060 (SVTSQGTQTQNQRL) show a composition bias toward polar residues. Short sequence motifs (TQT motif) lie at residues 1053–1055 (TQT) and 1065–1067 (TQT). Residues 1061–1072 (QHAETQTDRDLP) are compositionally biased toward basic and acidic residues. The segment covering 1076–1090 (QQPSTSQGSQVTDAT) has biased composition (polar residues). The segment covering 1091–1103 (ESLDFETLPEDSG) has biased composition (acidic residues). 2 stretches are compositionally biased toward polar residues: residues 1125–1134 (SEPSTDSTGQ) and 1181–1193 (GSQT…NRTR). Positions 1286–1307 (LLSSSPSLSPVNNSNYSNSDSS) are enriched in low complexity.

Belongs to the WD repeat AMBRA1 family. As to quaternary structure, component of the DCX(AMBRA1) E3 ubiquitin ligase complex.

The protein localises to the endoplasmic reticulum. Its subcellular location is the cytoplasm. The protein resides in the cytoskeleton. It is found in the cytoplasmic vesicle. It localises to the autophagosome. The protein localises to the mitochondrion. Its subcellular location is the cytosol. The protein resides in the nucleus. It is found in the cell junction. It localises to the focal adhesion. Its pathway is protein modification; protein ubiquitination. Its function is as follows. Substrate-recognition component of a DCX (DDB1-CUL4-X-box) E3 ubiquitin-protein ligase complex involved in cell cycle control and autophagy. The DCX(AMBRA1) complex specifically mediates the polyubiquitination of target proteins. Acts as an upstream master regulator of the transition from G1 to S cell phase: ambra1a specifically recognizes and binds phosphorylated cyclin-D (ccnd1, ccnd2 and ccnd3), leading to cyclin-D ubiquitination by the DCX(AMBRA1) complex and subsequent degradation. Acts as a regulator of Cul5-RING (CRL5) E3 ubiquitin-protein ligase complexes by mediating ubiquitination and degradation of Elongin-C (eloc) component of CRL5 complexes. Acts as a key regulator of autophagy by modulating the BECN1-PIK3C3 complex: controls protein turnover during neuronal development, and regulates normal cell survival and proliferation. In normal conditions, ambra1a is tethered to the cytoskeleton via interaction with dyneins light chains. Upon autophagy induction, ambra1a is released from the cytoskeletal docking site to induce autophagosome nucleation by mediating ubiquitination of proteins involved in autophagy. Also acts as an activator of mitophagy. Required for skeletal muscle development. This is Activating molecule in BECN1-regulated autophagy protein 1A from Danio rerio (Zebrafish).